Reading from the N-terminus, the 1028-residue chain is Beta-galactosidase (1028 aa).

The substrate site is built by Asn104 and Asp203. Position 203 (Asp203) interacts with Na(+). Mg(2+) contacts are provided by Glu418, His420, and Glu463. Substrate is bound by residues Glu463 and 539–542 (EYAH). Glu463 (proton donor) is an active-site residue. Glu539 serves as the catalytic Nucleophile. Asn599 provides a ligand contact to Mg(2+). The Na(+) site is built by Phe603 and Asn606. Asn606 and Trp1004 together coordinate substrate.

The protein belongs to the glycosyl hydrolase 2 family. As to quaternary structure, homodimer. Mg(2+) is required as a cofactor. The cofactor is Mn(2+). Requires Fe cation as cofactor. Na(+) serves as cofactor. It depends on K(+) as a cofactor.

The enzyme catalyses Hydrolysis of terminal non-reducing beta-D-galactose residues in beta-D-galactosides.. Completely inhibited by Hg(2+), Cu(2+) Ag(2+), and partially inhibited by Zn(2+), imidazole and EDTA. Activated by Ca(2+), Co(2+), Ni(2+). Functionally, this beta-galactosidase is also able to catalyze glycosyl transfer to a series of acceptors, including hexose, pentose, beta- or alpha-disaccharides, hexahydroxy alcohol, cyclitol, and aromatic glycosides, resulting in the production of galacto-oligosaccharides (GOS). The chain is Beta-galactosidase (lacZ) from Enterobacter agglomerans (Erwinia herbicola).